Reading from the N-terminus, the 60-residue chain is Large ribosomal subunit protein bL32A (60 aa).

Positions 1–19 are enriched in basic residues; that stretch reads MAVPKRRMSRSNTRSRRSQ. The disordered stretch occupies residues 1–21; that stretch reads MAVPKRRMSRSNTRSRRSQWK.

Belongs to the bacterial ribosomal protein bL32 family.

The protein is Large ribosomal subunit protein bL32A of Nocardia farcinica (strain IFM 10152).